The primary structure comprises 735 residues: Catalase-peroxidase (735 aa).

The tract at residues 1-31 (MENNTNPISGQGKCPFSGGAAKQSAGAGTRN) is disordered. Over residues 17–28 (SGGAAKQSAGAG) the composition is skewed to low complexity. Residues 103–226 (WHSAGTYRVA…LAAVQMGLIY (124 aa)) constitute a cross-link (tryptophyl-tyrosyl-methioninium (Trp-Tyr) (with M-252)). His104 acts as the Proton acceptor in catalysis. Positions 226-252 (YVNPEGPNGNPDPLASARDIRETFARM) form a cross-link, tryptophyl-tyrosyl-methioninium (Tyr-Met) (with W-103). Residue His267 participates in heme b binding. The interval 352–371 (KPKNGAGAGTVPDAHNSSKS) is disordered.

The protein belongs to the peroxidase family. Peroxidase/catalase subfamily. As to quaternary structure, homodimer or homotetramer. The cofactor is heme b. Formation of the three residue Trp-Tyr-Met cross-link is important for the catalase, but not the peroxidase activity of the enzyme.

It catalyses the reaction H2O2 + AH2 = A + 2 H2O. The catalysed reaction is 2 H2O2 = O2 + 2 H2O. In terms of biological role, bifunctional enzyme with both catalase and broad-spectrum peroxidase activity. The sequence is that of Catalase-peroxidase from Flavobacterium psychrophilum (strain ATCC 49511 / DSM 21280 / CIP 103535 / JIP02/86).